The following is a 280-amino-acid chain: Apoptosis regulator ced-9 (280 aa).

The tract at residues 33–59 is disordered; the sequence is GTEPTDFGINSDAQDLPSPSRQASTRR. Polar residues predominate over residues 43–59; that stretch reads SDAQDLPSPSRQASTRR. Positions 80–99 match the BH4 motif; the sequence is IEGFVVDYFTHRIRQNGMEW. Positions 160-179 match the BH1 motif; sequence QTDQCPMSYGRLIGLISFGG. Residues 213–229 carry the BH2 motif; the sequence is NWKEHNRSWDDFMTLGK.

It belongs to the Bcl-2 family. In terms of assembly, interacts with asymmetric homodimer ced-4; the interaction sequesters ced-4. Interacts with egl-1; the interaction results in ced-4 release. Interacts with dre-1; the interaction inhibits ced-9 activity, either directly or indirectly. Interacts with dct-1. May form a complex composed of ced-9, ced-4 and mac-1. Interacts with dynamin-related protein drp-1 (via residues 280-502); the interaction is enhanced by GTP rather than GDP; the interaction is probably direct and may occur at the mitochondrion. Interaction with drp-1 may be enhanced by interaction of ced-9 with egl-1, but not with ced-4. A ced-9/egl-1 complex may recruit drp-1 to the mitochondrial surface. Interacts with fzo-1; interaction may be suppressed by interaction of ced-9 with egl-1.

The protein localises to the perikaryon. The protein resides in the synapse. Its subcellular location is the endomembrane system. It is found in the mitochondrion membrane. It localises to the cytoplasm. Its function is as follows. Plays a major role in programmed cell death (PCD, apoptosis). egl-1 binds to and directly inhibits the activity of ced-9, releasing the cell death activator ced-4 from a ced-9/ced-4 containing protein complex and allowing ced-4 to activate the cell-killing caspase ced-3. During larval development, required for the elimination of transient presynaptic components downstream of egl-1 and upstream of ced-4 and ced-3 apoptotic pathway. Has been shown in one study to be dispensable in mitochondrial dynamics and morphology during early embryonic development. However, another study shows that a egl-1/ced-9 containing complex may promote drp-1-dependent mitochondrial fission. This Caenorhabditis elegans protein is Apoptosis regulator ced-9 (ced-9).